Here is a 393-residue protein sequence, read N- to C-terminus: PxcA-like protein (393 aa).

4 helical membrane-spanning segments follow: residues 173–193 (FLIVLIFIPLTVQILTKNLVF), 271–291 (IVNLLADIAGLVAFVVLIIVF), 306–326 (FLALNDITKVFIFILLTDMFV), and 354–374 (VYIFIATVPVFLDSLFKLLIF).

Belongs to the CemA family. PxcL subfamily.

Its subcellular location is the cell inner membrane. Functionally, together with PxcA, contributes to transient H(+) uptake following dark to light transition. Required for H(+) influx to activate the Calvin-Benson-Bassham cycle. May also be involved in CO(2) transport. This Synechocystis sp. (strain ATCC 27184 / PCC 6803 / Kazusa) protein is PxcA-like protein.